Consider the following 1714-residue polypeptide: uncharacterized protein (1714 aa).

2 disordered regions span residues 47-70 and 584-616; these read SVAG…SDDL and KKTG…KSKK. ATP-binding positions include 607–614 and 806–813; these read ATKESGKS and APTSAGKT. Positions 607 to 616 are enriched in basic and acidic residues; it reads ATKESGKSKK. The Helicase ATP-binding domain occupies 793–963; it reads LDSVDRGNSA…WLNSSEQAKS (171 aa). Positions 913 to 916 match the DEVH box motif; it reads DEVH. A disordered region spans residues 1197-1223; the sequence is KRKRDDAEKKKKGDKDEDAGPEKDDDE. Basic and acidic residues predominate over residues 1199–1218; sequence KRDDAEKKKKGDKDEDAGPE. A Helicase C-terminal domain is found at 1237–1391; that stretch reads ALERFKLRGR…NPPFTVLFLL (155 aa).

The protein belongs to the helicase family. SKI2 subfamily.

Its subcellular location is the nucleus. This is an uncharacterized protein from Caenorhabditis elegans.